Reading from the N-terminus, the 354-residue chain is MIPQRIKELEAYKTEVTPASVRLSSNEFPYDFPEEIKQRALEELKKVPLNKYPDPEAKELKAVLADFFGVKEENLVLGNGSDELIYYLSIAIGELYIPVYIPVPTFPMYEISAKVLGRPLVKVQLDENFDIDLERSIELIEKEKPVLGYFAYPNNPTGNLFSRGKIEEIRNRGVFCVIDEAYYHYSGETFLEDALKREDTVVLRTLSKIGMASLRVGILIGKGEIVSEINKVRLPFNVTYPSQVMAKVLLTEGREFLMEKIQEVVKERERMYDEMKKIEGVEVFPSKANFLLFRTPYPAHEVYQELLKRDVLVRNVSYMEGLQKCLRVSVGKPEENNKFLEALEESIKSLSSSL.

Lysine 208 carries the post-translational modification N6-(pyridoxal phosphate)lysine.

Belongs to the class-II pyridoxal-phosphate-dependent aminotransferase family. Histidinol-phosphate aminotransferase subfamily. In terms of assembly, homodimer. It depends on pyridoxal 5'-phosphate as a cofactor.

The enzyme catalyses L-histidinol phosphate + 2-oxoglutarate = 3-(imidazol-4-yl)-2-oxopropyl phosphate + L-glutamate. The protein operates within amino-acid biosynthesis; L-histidine biosynthesis; L-histidine from 5-phospho-alpha-D-ribose 1-diphosphate: step 7/9. In Aquifex aeolicus (strain VF5), this protein is Histidinol-phosphate aminotransferase.